A 77-amino-acid polypeptide reads, in one-letter code: Conotoxin VnMEKL-023 (77 aa).

The first 19 residues, 1–19 (MQKLTILLLVAAVLMSTQA), serve as a signal peptide directing secretion. Positions 20–37 (LIKGGGEKRPKEKIRFLS) are excised as a propeptide. 3 cysteine pairs are disulfide-bonded: C51–C65, C58–C69, and C64–C74.

This sequence belongs to the conotoxin O2 superfamily. Expressed by the venom duct.

The protein localises to the secreted. The protein is Conotoxin VnMEKL-023 of Conus ventricosus (Mediterranean cone).